The primary structure comprises 262 residues: NADPH-dependent 7-cyano-7-deazaguanine reductase (262 aa).

69-71 (IES) is a binding site for substrate. An NADPH-binding site is contributed by 71-72 (SK). Catalysis depends on cysteine 170, which acts as the Thioimide intermediate. Residue aspartate 177 is the Proton donor of the active site. 209–210 (HE) is a binding site for substrate. 238–239 (RG) serves as a coordination point for NADPH.

The protein belongs to the GTP cyclohydrolase I family. QueF type 2 subfamily. As to quaternary structure, homodimer.

It localises to the cytoplasm. It carries out the reaction 7-aminomethyl-7-carbaguanine + 2 NADP(+) = 7-cyano-7-deazaguanine + 2 NADPH + 3 H(+). The protein operates within tRNA modification; tRNA-queuosine biosynthesis. Catalyzes the NADPH-dependent reduction of 7-cyano-7-deazaguanine (preQ0) to 7-aminomethyl-7-deazaguanine (preQ1). The protein is NADPH-dependent 7-cyano-7-deazaguanine reductase of Buchnera aphidicola subsp. Schizaphis graminum (strain Sg).